Here is a 128-residue protein sequence, read N- to C-terminus: Glyoxylase-like domain-containing protein (128 aa).

Residues 6-125 enclose the VOC domain; sequence QISGIEIPAT…EGNTHAICTR (120 aa).

The protein operates within mycotoxin biosynthesis. Glyoxylase-like domain-containing protein; part of the gene cluster that mediates the biosynthesis of the selective antifungal agent ascochitine, an o-quinone methide that plays a possible protective role against other microbial competitors in nature and is considered to be important for pathogenicity of legume-associated Didymella species. The pathway probably begins with the synthesis of a keto-aldehyde intermediate by the ascochitine non-reducing polyketide synthase pksAC from successive condensations of 4 malonyl-CoA units, presumably with a simple acetyl-CoA starter unit. Release of the keto-aldehyde intermediate is consistent with the presence of the C-terminal reductive release domain. The HR-PKS (orf7) probably makes a diketide starter unit which is passed to the non-reducing polyketide synthase pksAC for further extension, producing ascochital and ascochitine. The aldehyde dehydrogenase (orf1), the 2-oxoglutarate-dependent dioxygenase (orf3) and the dehydrogenase (orf9) are probably involved in subsequent oxidations of methyl groups to the carboxylic acid of the heterocyclic ring. The ascochitine gene cluster also includes a gene encoding a short peptide with a cupin domain (orf2) that is often found in secondary metabolite gene clusters and which function has still to be determined. This Didymella fabae (Leaf and pod spot disease fungus) protein is Glyoxylase-like domain-containing protein.